We begin with the raw amino-acid sequence, 417 residues long: Serine hydroxymethyltransferase 1 (417 aa).

(6S)-5,6,7,8-tetrahydrofolate is bound by residues L121 and 125–127; that span reads GHL. K230 carries the post-translational modification N6-(pyridoxal phosphate)lysine. 355–357 contacts (6S)-5,6,7,8-tetrahydrofolate; sequence SPF.

The protein belongs to the SHMT family. As to quaternary structure, homodimer. Pyridoxal 5'-phosphate is required as a cofactor.

The protein localises to the cytoplasm. It carries out the reaction (6R)-5,10-methylene-5,6,7,8-tetrahydrofolate + glycine + H2O = (6S)-5,6,7,8-tetrahydrofolate + L-serine. It participates in one-carbon metabolism; tetrahydrofolate interconversion. It functions in the pathway amino-acid biosynthesis; glycine biosynthesis; glycine from L-serine: step 1/1. In terms of biological role, catalyzes the reversible interconversion of serine and glycine with tetrahydrofolate (THF) serving as the one-carbon carrier. This reaction serves as the major source of one-carbon groups required for the biosynthesis of purines, thymidylate, methionine, and other important biomolecules. Also exhibits THF-independent aldolase activity toward beta-hydroxyamino acids, producing glycine and aldehydes, via a retro-aldol mechanism. The polypeptide is Serine hydroxymethyltransferase 1 (Pseudomonas aeruginosa (strain ATCC 15692 / DSM 22644 / CIP 104116 / JCM 14847 / LMG 12228 / 1C / PRS 101 / PAO1)).